Consider the following 125-residue polypeptide: Small ribosomal subunit protein bS6 (125 aa).

It belongs to the bacterial ribosomal protein bS6 family.

Its function is as follows. Binds together with bS18 to 16S ribosomal RNA. The sequence is that of Small ribosomal subunit protein bS6 from Campylobacter jejuni subsp. jejuni serotype O:23/36 (strain 81-176).